A 25-amino-acid chain; its full sequence is Cytochrome c oxidase subunit 1 (25 aa).

The protein belongs to the heme-copper respiratory oxidase family. Cu(2+) is required as a cofactor. Heme serves as cofactor.

It localises to the cell inner membrane. It carries out the reaction 4 Fe(II)-[cytochrome c] + O2 + 8 H(+)(in) = 4 Fe(III)-[cytochrome c] + 2 H2O + 4 H(+)(out). It functions in the pathway energy metabolism; oxidative phosphorylation. Functionally, subunit I and II form the functional core of the enzyme complex. Electrons originating in cytochrome c are transferred via heme a and Cu(A) to the binuclear center formed by heme a3 and Cu(B). This cytochrome c oxidase shows proton pump activity across the membrane in addition to the electron transfer. The protein is Cytochrome c oxidase subunit 1 (ctaD) of Paracoccus versutus (Thiobacillus versutus).